Consider the following 585-residue polypeptide: Bestrophin-1 (585 aa).

Over Met-1–Leu-31 the chain is Cytoplasmic. Ala-10 serves as a coordination point for Ca(2+). Residues Leu-32–Arg-51 traverse the membrane as a helical segment. Residues Leu-52–Leu-60 are Extracellular-facing. A helical membrane pass occupies residues Met-61–Leu-82. The Cytoplasmic segment spans residues Gly-83–Thr-237. A helical transmembrane segment spans residues Gln-238 to Arg-255. Residues Gln-256 to Pro-274 are Extracellular-facing. Residues Val-275–Leu-288 traverse the membrane as a helical segment. The Cytoplasmic segment spans residues Lys-289–Ser-585. Residues Gln-293, Asn-296, Asp-301, and Asp-304 each contribute to the Ca(2+) site. Residues Pro-346 to Gln-379 form an auto-inhibitory segment region.

Belongs to the anion channel-forming bestrophin (TC 1.A.46) family. Calcium-sensitive chloride channel subfamily. In terms of assembly, interacts with YWHAG; this interaction promotes the ligand-gated L-glutamate channel activity leading to the positive regulation of NMDA glutamate receptor activity through the L-glutamate secretion.

Its subcellular location is the cell membrane. It is found in the basolateral cell membrane. The enzyme catalyses chloride(in) = chloride(out). It carries out the reaction hydrogencarbonate(in) = hydrogencarbonate(out). It catalyses the reaction 4-aminobutanoate(in) = 4-aminobutanoate(out). The catalysed reaction is L-glutamate(out) = L-glutamate(in). In terms of biological role, ligand-gated anion channel that allows the movement of anions across cell membranes when activated by calcium (Ca2+). Allows the movement of chloride and hydrogencarbonate. Found in a partially open conformation leading to significantly smaller chloride movement. Upon F2R/PAR-1 activation, the sequestered calcium is released into the cytosol of astrocytes, leading to the (Ca2+)-dependent release of L-glutamate into the synaptic cleft that targets the neuronal postsynaptic GRIN2A/NMDAR receptor resulting in the synaptic plasticity regulation. Upon activation of the norepinephrine-alpha-1 adrenergic receptor signaling pathway, transports as well D-serine than L-glutamate in a (Ca2+)-dependent manner, leading to activation of adjacent NMDAR receptors and therefore regulates the heterosynaptic long-term depression and metaplasticity during initial memory acquisition. Releases the 4-aminobutanoate neurotransmitter in a (Ca2+)-dependent manner, and participates in its tonic release from cerebellar glial cells. The polypeptide is Bestrophin-1 (BEST1) (Macaca fascicularis (Crab-eating macaque)).